Here is a 270-residue protein sequence, read N- to C-terminus: Orotidine 5'-phosphate decarboxylase (270 aa).

Residues Asp-43, 65–67 (KTH), 96–105 (DRKFGDIGST), Tyr-217, and Arg-236 each bind substrate. The Proton donor role is filled by Lys-98.

Belongs to the OMP decarboxylase family.

It catalyses the reaction orotidine 5'-phosphate + H(+) = UMP + CO2. The protein operates within pyrimidine metabolism; UMP biosynthesis via de novo pathway; UMP from orotate: step 2/2. This chain is Orotidine 5'-phosphate decarboxylase (URA3), found in Aureobasidium pullulans (Black yeast).